A 145-amino-acid polypeptide reads, in one-letter code: Large ribosomal subunit protein uL15 (145 aa).

The segment at 23–51 (IGSGWGKTGGRGHKGQKSRSGGKIRKSFE) is disordered. The span at 32 to 47 (GRGHKGQKSRSGGKIR) shows a compositional bias: basic residues.

This sequence belongs to the universal ribosomal protein uL15 family. As to quaternary structure, part of the 50S ribosomal subunit.

Functionally, binds to the 23S rRNA. This Buchnera aphidicola subsp. Cinara cedri (strain Cc) protein is Large ribosomal subunit protein uL15.